A 322-amino-acid chain; its full sequence is PIH1 domain-containing protein 2 (322 aa).

It belongs to the PIH1 family.

In Danio rerio (Zebrafish), this protein is PIH1 domain-containing protein 2 (pih1d2).